Reading from the N-terminus, the 159-residue chain is Ribosome maturation factor RimP (159 aa).

The protein belongs to the RimP family.

The protein resides in the cytoplasm. Required for maturation of 30S ribosomal subunits. In Geobacter sulfurreducens (strain ATCC 51573 / DSM 12127 / PCA), this protein is Ribosome maturation factor RimP.